Reading from the N-terminus, the 348-residue chain is Holliday junction branch migration complex subunit RuvB (348 aa).

A large ATPase domain (RuvB-L) region spans residues 4-184; it reads TDRLIAASGR…FGIVQRLEFY (181 aa). ATP is bound by residues Ile-23, Arg-24, Gly-65, Lys-68, Thr-69, Thr-70, 131–133, Arg-174, Tyr-184, and Arg-221; that span reads EDF. Thr-69 is a Mg(2+) binding site. The segment at 185–255 is small ATPAse domain (RuvB-S); that stretch reads SNKDLATIVS…VADMALNLLD (71 aa). Positions 258-348 are head domain (RuvB-H); sequence ERGFDHSDRR…GGEYAAQDDE (91 aa). DNA is bound by residues Arg-294, Arg-313, and Arg-318.

The protein belongs to the RuvB family. In terms of assembly, homohexamer. Forms an RuvA(8)-RuvB(12)-Holliday junction (HJ) complex. HJ DNA is sandwiched between 2 RuvA tetramers; dsDNA enters through RuvA and exits via RuvB. An RuvB hexamer assembles on each DNA strand where it exits the tetramer. Each RuvB hexamer is contacted by two RuvA subunits (via domain III) on 2 adjacent RuvB subunits; this complex drives branch migration. In the full resolvosome a probable DNA-RuvA(4)-RuvB(12)-RuvC(2) complex forms which resolves the HJ.

The protein localises to the cytoplasm. It catalyses the reaction ATP + H2O = ADP + phosphate + H(+). The RuvA-RuvB-RuvC complex processes Holliday junction (HJ) DNA during genetic recombination and DNA repair, while the RuvA-RuvB complex plays an important role in the rescue of blocked DNA replication forks via replication fork reversal (RFR). RuvA specifically binds to HJ cruciform DNA, conferring on it an open structure. The RuvB hexamer acts as an ATP-dependent pump, pulling dsDNA into and through the RuvAB complex. RuvB forms 2 homohexamers on either side of HJ DNA bound by 1 or 2 RuvA tetramers; 4 subunits per hexamer contact DNA at a time. Coordinated motions by a converter formed by DNA-disengaged RuvB subunits stimulates ATP hydrolysis and nucleotide exchange. Immobilization of the converter enables RuvB to convert the ATP-contained energy into a lever motion, pulling 2 nucleotides of DNA out of the RuvA tetramer per ATP hydrolyzed, thus driving DNA branch migration. The RuvB motors rotate together with the DNA substrate, which together with the progressing nucleotide cycle form the mechanistic basis for DNA recombination by continuous HJ branch migration. Branch migration allows RuvC to scan DNA until it finds its consensus sequence, where it cleaves and resolves cruciform DNA. The polypeptide is Holliday junction branch migration complex subunit RuvB (Pseudomonas entomophila (strain L48)).